A 476-amino-acid chain; its full sequence is MARYETVIGVEVHAQLKTKSKIFCSCSTRFGVDPNENVCPVCSGMPGVLPVLNATVVEYAAKMGLATGCVVNPVSVFARKNYFYPDLPKGYQTSQFEQPICEHGHVDITVDGTAKRIGITRIHMEEDAGKNIHSAADNLSYVDLNRACVPLIEIVSEPDMRGPEEVVAYLKALRAILVYLDVCDGNMEEGSFRCDANVSLRPVGQAEFGTRAELKNLNSFRHVQKAIEYEVERQADILDDGGKVIQETRLYDAAKNTTASMRGKEEAHDYRYFPDPDLVPVRIEAATLDKWRAELPELPEARRARFVADFGLSDYDAEVLTAERDMAEYFEAAVAAGADPKKAANWMQSELLRELNQAGVAARDAKLTPEKLASLVKLIDSGEISGKIAKQIFPDLFAQGLDPADYVRQKGLSQISDSNALESAVEAVLAANPAEVEAFRGGKTKLMGFFVGQIMKATKGQANPGLVNELLQKKLG.

It belongs to the GatB/GatE family. GatB subfamily. As to quaternary structure, heterotrimer of A, B and C subunits.

It catalyses the reaction L-glutamyl-tRNA(Gln) + L-glutamine + ATP + H2O = L-glutaminyl-tRNA(Gln) + L-glutamate + ADP + phosphate + H(+). It carries out the reaction L-aspartyl-tRNA(Asn) + L-glutamine + ATP + H2O = L-asparaginyl-tRNA(Asn) + L-glutamate + ADP + phosphate + 2 H(+). Allows the formation of correctly charged Asn-tRNA(Asn) or Gln-tRNA(Gln) through the transamidation of misacylated Asp-tRNA(Asn) or Glu-tRNA(Gln) in organisms which lack either or both of asparaginyl-tRNA or glutaminyl-tRNA synthetases. The reaction takes place in the presence of glutamine and ATP through an activated phospho-Asp-tRNA(Asn) or phospho-Glu-tRNA(Gln). The protein is Aspartyl/glutamyl-tRNA(Asn/Gln) amidotransferase subunit B of Solidesulfovibrio magneticus (strain ATCC 700980 / DSM 13731 / RS-1) (Desulfovibrio magneticus).